The following is a 204-amino-acid chain: VQ motif-containing protein 13 (204 aa).

A compositionally biased stretch (basic and acidic residues) spans 1 to 12; it reads MEKSPRYRDKAK. Residues 1–26 are disordered; that stretch reads MEKSPRYRDKAKNLLPSPSSCTTTPT. Residues 16–26 show a composition bias toward low complexity; that stretch reads PSPSSCTTTPT. Ser-17 bears the Phosphoserine mark. A VQ motif is present at residues 46-55; sequence FKQVVQLLTG. Residues 56–90 are disordered; it reads IPKNPTHQPDPRFPPFHSIPPIKAVTNKKQSSSFR. Phosphoserine occurs at positions 73 and 128. Thr-131 is subject to Phosphothreonine. Positions 133–204 are disordered; sequence LMSDPFYRPG…HSPAPSPHDH (72 aa). The segment covering 143-152 has biased composition (low complexity); the sequence is SFSQSPSDSK. Phosphoserine is present on residues Ser-147 and Ser-173. Phosphothreonine occurs at positions 177 and 192. A phosphoserine mark is found at Ser-196 and Ser-200.

In terms of processing, phosphorylated on serine and threonine residues by MPK6.

It is found in the nucleus. Its function is as follows. May modulate WRKY transcription factor activities. This Arabidopsis thaliana (Mouse-ear cress) protein is VQ motif-containing protein 13.